A 603-amino-acid chain; its full sequence is Golgin subfamily A member 8B (603 aa).

4 disordered regions span residues 1 to 82 (MAEE…NSRS), 95 to 125 (LKQQ…ELEG), 398 to 419 (TSAE…ESSG), and 460 to 492 (PGDS…GAAG). Residues 46–66 (AASGGCHSSEASSSASSSLHA) are compositionally biased toward low complexity. A compositionally biased stretch (polar residues) spans 69 to 82 (SPCQEQAAVLNSRS). 2 coiled-coil regions span residues 82-173 (SIKI…GELE) and 212-440 (LKGH…LELG). Positions 100 to 124 (KQVEHQLEEEKKANNEKQKAERELE) are enriched in basic and acidic residues. Positions 469 to 482 (PGGGHHQAGPGQGG) are enriched in gly residues. Residues 491–603 (AGDGVAACGS…CWAWLPRRRR (113 aa)) are golgi-targeting domain.

This sequence belongs to the GOLGA8 family. In terms of tissue distribution, highly expressed in brain, heart and kidney. Detected at lower levels in liver, thymus, spleen, lung and peripheral blood leukocytes.

The protein localises to the golgi apparatus. Its subcellular location is the golgi stack membrane. May be involved in maintaining Golgi structure. In Homo sapiens (Human), this protein is Golgin subfamily A member 8B (GOLGA8B).